A 229-amino-acid chain; its full sequence is Small ribosomal subunit protein uS3 (229 aa).

Residues 17–85 form the KH type-2 domain; the sequence is VKEWIKDEVR…NPQVSVDEVE (69 aa). Positions 202–229 are disordered; the sequence is LRGESGEDEGDKGDEQGGEAQEAEGAGA. Low complexity predominate over residues 219–229; the sequence is GEAQEAEGAGA.

It belongs to the universal ribosomal protein uS3 family. In terms of assembly, part of the 30S ribosomal subunit.

Functionally, binds the lower part of the 30S subunit head. The chain is Small ribosomal subunit protein uS3 from Archaeoglobus fulgidus (strain ATCC 49558 / DSM 4304 / JCM 9628 / NBRC 100126 / VC-16).